The chain runs to 156 residues: ATP synthase subunit b (156 aa).

The chain crosses the membrane as a helical span at residues 7 to 27; sequence LIGQTVAFIIFVWFCMKFVWP.

This sequence belongs to the ATPase B chain family. As to quaternary structure, F-type ATPases have 2 components, F(1) - the catalytic core - and F(0) - the membrane proton channel. F(1) has five subunits: alpha(3), beta(3), gamma(1), delta(1), epsilon(1). F(0) has three main subunits: a(1), b(2) and c(10-14). The alpha and beta chains form an alternating ring which encloses part of the gamma chain. F(1) is attached to F(0) by a central stalk formed by the gamma and epsilon chains, while a peripheral stalk is formed by the delta and b chains.

It localises to the cell inner membrane. F(1)F(0) ATP synthase produces ATP from ADP in the presence of a proton or sodium gradient. F-type ATPases consist of two structural domains, F(1) containing the extramembraneous catalytic core and F(0) containing the membrane proton channel, linked together by a central stalk and a peripheral stalk. During catalysis, ATP synthesis in the catalytic domain of F(1) is coupled via a rotary mechanism of the central stalk subunits to proton translocation. Its function is as follows. Component of the F(0) channel, it forms part of the peripheral stalk, linking F(1) to F(0). This chain is ATP synthase subunit b, found in Shewanella sp. (strain MR-4).